Here is a 444-residue protein sequence, read N- to C-terminus: ATP-dependent protease ATPase subunit HslU (444 aa).

ATP is bound by residues isoleucine 18 and 60-65 (GVGKTE). The tract at residues 141–161 (DAWGNNEEGNNDSGTRQSFRK) is disordered. Positions 147 to 157 (EEGNNDSGTRQ) are enriched in polar residues. 3 residues coordinate ATP: aspartate 257, glutamate 322, and arginine 394.

This sequence belongs to the ClpX chaperone family. HslU subfamily. In terms of assembly, a double ring-shaped homohexamer of HslV is capped on each side by a ring-shaped HslU homohexamer. The assembly of the HslU/HslV complex is dependent on binding of ATP.

The protein resides in the cytoplasm. Functionally, ATPase subunit of a proteasome-like degradation complex; this subunit has chaperone activity. The binding of ATP and its subsequent hydrolysis by HslU are essential for unfolding of protein substrates subsequently hydrolyzed by HslV. HslU recognizes the N-terminal part of its protein substrates and unfolds these before they are guided to HslV for hydrolysis. In Aliivibrio fischeri (strain ATCC 700601 / ES114) (Vibrio fischeri), this protein is ATP-dependent protease ATPase subunit HslU.